The following is a 120-amino-acid chain: MVKLTSIAAGVAAIAATASATTTLAQSDERVNLVELGVYVSDIRAHLAQYYMFQAAHPTETYPVEVAEAVFNYGDFTTMLTGIAPDQVTRMITGVPWYSSRLKPAISSALSKDGIYTIAN.

A signal peptide spans methionine 1–alanine 20.

The protein belongs to the SRP1/TIP1 family. Seripauperin subfamily.

The chain is Seripauperin-8 (PAU8) from Saccharomyces cerevisiae (strain ATCC 204508 / S288c) (Baker's yeast).